An 880-amino-acid polypeptide reads, in one-letter code: EP-cadherin (880 aa).

Positions 1–28 (MGSTRLRNASVWLCGLLCLLQVVPSINA) are cleaved as a signal peptide. A propeptide spanning residues 29 to 155 (DVSGCKPGFS…THTGLKRKKR (127 aa)) is cleaved from the precursor. Asparagine 61 carries N-linked (GlcNAc...) asparagine glycosylation. Cadherin domains follow at residues 156–263 (DWVI…RPKF), 264–376 (TQDV…APIF), 377–487 (DPKT…APFF), 488–593 (VPAV…DNGP), and 594–704 (VPSP…GFDL). At 156–703 (DWVIPPIKVS…CQEKLVGGFD (548 aa)) the chain is on the extracellular side. Threonine 343, threonine 382, and threonine 400 each carry an O-linked (GalNAc...) threonine glycan. A glycan (N-linked (GlcNAc...) asparagine) is linked at asparagine 425. O-linked (GalNAc...) threonine glycans are attached at residues threonine 428, threonine 469, threonine 471, threonine 473, and threonine 475. Asparagine 558 is a glycosylation site (N-linked (GlcNAc...) asparagine). Residues threonine 562, threonine 576, threonine 578, and threonine 580 are each glycosylated (O-linked (GalNAc...) threonine). 2 cysteine pairs are disulfide-bonded: cysteine 603–cysteine 687 and cysteine 685–cysteine 694. N-linked (GlcNAc...) asparagine glycosylation occurs at asparagine 681. The chain crosses the membrane as a helical span at residues 704–728 (LPIILVILGSVLALLILFLLLLLFL). The Cytoplasmic segment spans residues 729-880 (KRKKVVKEPL…DMYGGDDDEE (152 aa)). The interval 790–826 (PAPHYRPRPSNPDEIGNFIDENLDAADNDPTAPPYDS) is disordered.

Interacts with CTNNB1.

Its subcellular location is the cell membrane. Functionally, cadherins are calcium-dependent cell adhesion proteins. They preferentially interact with themselves in a homophilic manner in connecting cells; cadherins may thus contribute to the sorting of heterogeneous cell types. The protein is EP-cadherin of Xenopus laevis (African clawed frog).